Here is a 350-residue protein sequence, read N- to C-terminus: Cephaeline 6'-O-methyltransferase CiOMT (350 aa).

Gly193, Asp216, Asp236, Met237, and Lys250 together coordinate S-adenosyl-L-methionine. The active-site Proton acceptor is the His254.

The protein belongs to the class I-like SAM-binding methyltransferase superfamily. Cation-independent O-methyltransferase family.

The protein localises to the cytoplasm. It localises to the cytosol. It carries out the reaction 7'-O-demethylcephaeline + S-adenosyl-L-methionine = cephaeline + S-adenosyl-L-homocysteine + H(+). The enzyme catalyses cephaeline + S-adenosyl-L-methionine = emetine + S-adenosyl-L-homocysteine + H(+). It participates in alkaloid biosynthesis. With respect to regulation, inhibited by Co(2+), Ni(2+), Zn(2+) and Mn(2+) ions. In terms of biological role, O-methyltransferase involved in the biosynthesis of ipecac and benzylisoquinoline monoterpenoid-isoquinoline alkaloids natural products, starting by the condensation of dopamine and secologanin, and including emetine and cephaeline, drugs used both as anti-protozoal (e.g. treatment of ameobiasis) and as emetic agents. Catalyzes successively the 7'-O-methylation of 7'-O-demethylcephaeline to produce cephaeline, and its 6'-O-methylation to produce emetine. This chain is Cephaeline 6'-O-methyltransferase CiOMT, found in Carapichea ipecacuanha (Ipecac).